Here is a 353-residue protein sequence, read N- to C-terminus: MSEPLKPRIDFAEPLKEEPTSAFKAQQTFSEAESHTFAPAAIDERPEDEGVAEAAVDAALRPKRSLWRKMVMGGLALFGASVVGQGVQWTMNAWQTQDWVALGGCAAGALIVGAGVGSVVTEWWRLWRLRQRAHERDEARELLHSHSVVKGRAFCEKLAQQAGIDQSHPALQRWYAAIHETQNDREIVGLYAHLVQPVLDAQARREISRFAAESTLMIAVSPLALVDMAFIAWRNLRLINRIATLYGIELGYYSRLRLFRLVLLNIAFAGASELVREVGMDWMSQDLAARLSTRAAQGIGAGLLTARLGIKAMELCRPLPWADNDKPRLGDFRRQLIGQLKETLQKSKSSPEK.

Residues 1-19 (MSEPLKPRIDFAEPLKEEP) are compositionally biased toward basic and acidic residues. Positions 1-48 (MSEPLKPRIDFAEPLKEEPTSAFKAQQTFSEAESHTFAPAAIDERPED) are disordered. Residues 1–69 (MSEPLKPRID…LRPKRSLWRK (69 aa)) are Periplasmic-facing. Residues 70–90 (MVMGGLALFGASVVGQGVQWT) form a helical membrane-spanning segment. The Cytoplasmic portion of the chain corresponds to 91 to 99 (MNAWQTQDW). The helical transmembrane segment at 100–120 (VALGGCAAGALIVGAGVGSVV) threads the bilayer. The Periplasmic portion of the chain corresponds to 121–212 (TEWWRLWRLR…ARREISRFAA (92 aa)). A helical transmembrane segment spans residues 213-233 (ESTLMIAVSPLALVDMAFIAW). Residues 234–353 (RNLRLINRIA…LQKSKSSPEK (120 aa)) lie on the Cytoplasmic side of the membrane.

It belongs to the UPF0283 family.

The protein localises to the cell inner membrane. The sequence is that of UPF0283 membrane protein YcjF (ycjF) from Salmonella typhi.